The primary structure comprises 303 residues: Pantothenate synthetase (303 aa).

30 to 37 (MGYLHAGH) serves as a coordination point for ATP. Residue His37 is the Proton donor of the active site. Gln61 is a (R)-pantoate binding site. Gln61 is a binding site for beta-alanine. 147 to 150 (GAKD) provides a ligand contact to ATP. Residue Gln153 coordinates (R)-pantoate. ATP contacts are provided by residues Val176 and 184-187 (LSSR).

Belongs to the pantothenate synthetase family. As to quaternary structure, homodimer.

Its subcellular location is the cytoplasm. It carries out the reaction (R)-pantoate + beta-alanine + ATP = (R)-pantothenate + AMP + diphosphate + H(+). It participates in cofactor biosynthesis; (R)-pantothenate biosynthesis; (R)-pantothenate from (R)-pantoate and beta-alanine: step 1/1. In terms of biological role, catalyzes the condensation of pantoate with beta-alanine in an ATP-dependent reaction via a pantoyl-adenylate intermediate. This Rhizobium johnstonii (strain DSM 114642 / LMG 32736 / 3841) (Rhizobium leguminosarum bv. viciae) protein is Pantothenate synthetase.